We begin with the raw amino-acid sequence, 345 residues long: Hydroxymethylglutaryl-CoA synthase (345 aa).

Aspartate 28 provides a ligand contact to (3S)-3-hydroxy-3-methylglutaryl-CoA. Glutamate 80 (proton donor/acceptor) is an active-site residue. Cysteine 112 and threonine 153 together coordinate (3S)-3-hydroxy-3-methylglutaryl-CoA. Residue cysteine 112 is the Acyl-thioester intermediate of the active site. Residue arginine 199 coordinates CoA. The (3S)-3-hydroxy-3-methylglutaryl-CoA site is built by threonine 201 and histidine 234. The Proton donor/acceptor role is filled by histidine 234. Position 239 (lysine 239) interacts with CoA. (3S)-3-hydroxy-3-methylglutaryl-CoA is bound by residues arginine 243, asparagine 266, and serine 296.

This sequence belongs to the thiolase-like superfamily. Archaeal HMG-CoA synthase family. As to quaternary structure, interacts with acetoacetyl-CoA thiolase that catalyzes the precedent step in the pathway and with a DUF35 protein. The acetoacetyl-CoA thiolase/HMG-CoA synthase complex channels the intermediate via a fused CoA-binding site, which allows for efficient coupling of the endergonic thiolase reaction with the exergonic HMGCS reaction.

The enzyme catalyses acetoacetyl-CoA + acetyl-CoA + H2O = (3S)-3-hydroxy-3-methylglutaryl-CoA + CoA + H(+). It functions in the pathway metabolic intermediate biosynthesis; (R)-mevalonate biosynthesis; (R)-mevalonate from acetyl-CoA: step 2/3. In terms of biological role, catalyzes the condensation of acetyl-CoA with acetoacetyl-CoA to form 3-hydroxy-3-methylglutaryl-CoA (HMG-CoA). Functions in the mevalonate (MVA) pathway leading to isopentenyl diphosphate (IPP), a key precursor for the biosynthesis of isoprenoid compounds that are building blocks of archaeal membrane lipids. This is Hydroxymethylglutaryl-CoA synthase from Methanocaldococcus jannaschii (strain ATCC 43067 / DSM 2661 / JAL-1 / JCM 10045 / NBRC 100440) (Methanococcus jannaschii).